The following is a 260-amino-acid chain: Dolichol-phosphate mannosyltransferase subunit 1 (260 aa).

Residues 1 to 25 (MASTGASRSLAASPRPPQGRSSRQD) are disordered. Position 2 is an N-acetylalanine (alanine 2). 2 positions are modified to phosphoserine: serine 3 and serine 9. Proline 32, tyrosine 34, glutamate 36, isoleucine 63, aspartate 65, aspartate 118, alanine 119, aspartate 120, arginine 147, arginine 234, and lysine 240 together coordinate GDP-alpha-D-mannose. Residue aspartate 120 participates in Mg(2+) binding. Aspartate 120 serves as a coordination point for Mn(2+).

Belongs to the glycosyltransferase 2 family. Component of the dolichol-phosphate mannose (DPM) synthase complex composed of DPM1, DPM2 and DPM3; within the complex, directly interacts with DPM3. This interaction may stabilize DPM1. Mg(2+) is required as a cofactor. Requires Mn(2+) as cofactor. It depends on Ca(2+) as a cofactor.

The protein resides in the endoplasmic reticulum. The enzyme catalyses a di-trans,poly-cis-dolichyl phosphate + GDP-alpha-D-mannose = a di-trans,poly-cis-dolichyl beta-D-mannosyl phosphate + GDP. It participates in protein modification; protein glycosylation. Its function is as follows. Transfers mannose from GDP-mannose to dolichol monophosphate to form dolichol phosphate mannose (Dol-P-Man) which is the mannosyl donor in pathways leading to N-glycosylation, glycosyl phosphatidylinositol membrane anchoring, and O-mannosylation of proteins; catalytic subunit of the dolichol-phosphate mannose (DPM) synthase complex. This is Dolichol-phosphate mannosyltransferase subunit 1 (Dpm1) from Mus musculus (Mouse).